Reading from the N-terminus, the 435-residue chain is Cytidine monophosphate-N-acetylneuraminic acid hydroxylase (435 aa).

This sequence belongs to the CMP-Neu5Ac hydroxylase family. The cofactor is [2Fe-2S] cluster.

It is found in the cytoplasm. It catalyses the reaction CMP-N-acetyl-beta-neuraminate + 2 Fe(II)-[cytochrome b5] + O2 + 2 H(+) = CMP-N-glycoloyl-beta-neuraminate + 2 Fe(III)-[cytochrome b5] + H2O. It functions in the pathway amino-sugar metabolism; N-acetylneuraminate metabolism. Sialic acids are components of carbohydrate chains of glycoconjugates and are involved in cell-cell recognition and cell-pathogen interactions. Catalyzes the conversion of CMP-N-acetylneuraminic acid (CMP-Neu5Ac) into its hydroxylated derivative CMP-N-glycolylneuraminic acid (CMP-Neu5Gc), a sialic acid abundantly expressed at the surface of many cells. The polypeptide is Cytidine monophosphate-N-acetylneuraminic acid hydroxylase (Sus scrofa (Pig)).